The sequence spans 415 residues: Protein fuzzy homolog (415 aa).

Belongs to the fuzzy family. In terms of assembly, component of the CPLANE (ciliogenesis and planar polarity effectors) complex, composed of INTU, FUZ and WDPCP. Interacts with CPLANE1 and CPLANE2.

The protein resides in the cytoplasm. The protein localises to the cytoskeleton. It localises to the cilium basal body. In terms of biological role, probable planar cell polarity effector involved in cilium biogenesis. Proposed to function as core component of the CPLANE (ciliogenesis and planar polarity effectors) complex involved in the recruitment of peripheral IFT-A proteins to basal bodies. May regulate protein and membrane transport to the cilium. May regulate the morphogenesis of hair follicles which depends on functional primary cilia. Binds phosphatidylinositol 3-phosphate with highest affinity, followed by phosphatidylinositol 4-phosphate and phosphatidylinositol 5-phosphate. The protein is Protein fuzzy homolog (Fuz) of Rattus norvegicus (Rat).